A 119-amino-acid chain; its full sequence is NADH dehydrogenase [ubiquinone] 1 subunit C2 (119 aa).

Residues 56-75 form a helical membrane-spanning segment; sequence GLHRQLLYITAFFFAGYYLV.

This sequence belongs to the complex I NDUFC2 subunit family. As to quaternary structure, complex I is composed of 45 different subunits. Interacts with TMEM242.

The protein localises to the mitochondrion inner membrane. Accessory subunit of the mitochondrial membrane respiratory chain NADH dehydrogenase (Complex I), that is believed not to be involved in catalysis but required for the complex assembly. Complex I functions in the transfer of electrons from NADH to the respiratory chain. The immediate electron acceptor for the enzyme is believed to be ubiquinone. The protein is NADH dehydrogenase [ubiquinone] 1 subunit C2 of Pan troglodytes (Chimpanzee).